A 238-amino-acid chain; its full sequence is Endothelin-3 (238 aa).

An N-terminal signal peptide occupies residues 1–16 (MEPGLWLLFGLTVTSA). Positions 17 to 94 (AGFVPCSQSG…AEGAPEHHRS (78 aa)) are excised as a propeptide. Residues 24 to 89 (QSGDAGRRGV…GQEQAAEGAP (66 aa)) form a disordered region. Cystine bridges form between Cys-97/Cys-111 and Cys-99/Cys-107. The propeptide occupies 118 to 238 (INTPEQTVPY…PRCLFQEGAP (121 aa)). Positions 159–173 (CACVGRYDKACLHFC) are endothelin-like. The disordered stretch occupies residues 183 to 219 (SRTAEKTDKEEEGKVEVKDQQSKQALDLHHPKLMPGS). The segment covering 185 to 212 (TAEKTDKEEEGKVEVKDQQSKQALDLHH) has biased composition (basic and acidic residues).

This sequence belongs to the endothelin/sarafotoxin family. Expressed in trophoblasts and placental stem villi vessels, but not in cultured placental smooth muscle cells.

It localises to the secreted. Endothelins are endothelium-derived vasoconstrictor peptides. The protein is Endothelin-3 (EDN3) of Homo sapiens (Human).